Reading from the N-terminus, the 565-residue chain is Transcription factor asqA (565 aa).

The interval 204 to 273 is fungal transcription factor domain; sequence MDTAMAQAVR…HSMPALCIDS (70 aa).

The protein resides in the nucleus. Transcription factor that regulates specifically the 4'-methoxyviridicatin/aspoquinolone biosynthesis cluster. The protein is Transcription factor asqA of Emericella nidulans (strain FGSC A4 / ATCC 38163 / CBS 112.46 / NRRL 194 / M139) (Aspergillus nidulans).